The following is a 113-amino-acid chain: Hydrogenase maturation factor HypA (113 aa).

Ni(2+) is bound at residue histidine 2. Zn(2+) is bound by residues cysteine 73, cysteine 76, cysteine 89, and cysteine 92.

The protein belongs to the HypA/HybF family.

In terms of biological role, involved in the maturation of [NiFe] hydrogenases. Required for nickel insertion into the metal center of the hydrogenase. This Cereibacter sphaeroides (strain ATCC 17023 / DSM 158 / JCM 6121 / CCUG 31486 / LMG 2827 / NBRC 12203 / NCIMB 8253 / ATH 2.4.1.) (Rhodobacter sphaeroides) protein is Hydrogenase maturation factor HypA.